The chain runs to 780 residues: B3 domain-containing transcription repressor VAL2 (780 aa).

Positions 286 to 387 form a DNA-binding region, TF-B3; it reads FEKVLSASDA…KLVMGYRKAT (102 aa). The segment at 515 to 565 adopts a CW-type zinc-finger fold; the sequence is TGEQEQWVQCDACGKWRQLPVDILLPPKWSCSDNLLDPGRSSCSAPDELSP. Zn(2+) contacts are provided by Cys-524, Cys-527, Cys-545, and Cys-557. 3 disordered regions span residues 577-608, 669-695, and 743-780; these read EFKRRRLASSNEKLNQSQDASALNSLGNAGIT, KRNKGEAGQASQQAQSQSECRDETEVE, and NTAGEQQSSDMVSTEHGSSSAAQETEKDTTNGAHDPVN. The segment covering 584 to 603 has biased composition (polar residues); it reads ASSNEKLNQSQDASALNSLG. A compositionally biased stretch (low complexity) spans 674-686; that stretch reads EAGQASQQAQSQS. Residues 743–765 show a composition bias toward polar residues; it reads NTAGEQQSSDMVSTEHGSSSAAQ.

The protein localises to the nucleus. Its function is as follows. Transcriptional repressor of gene expression involved in embryonic pathways, such as LEC1, ABI3, and FUS3. Repressor of the sugar-inducible genes involved in the seed maturation program in seedlings. Plays an essential role in regulating the transition from seed maturation to seedling growth. Functionally redundant with VAL1/HSI2. The protein is B3 domain-containing transcription repressor VAL2 (VAL2) of Arabidopsis thaliana (Mouse-ear cress).